A 231-amino-acid chain; its full sequence is Ribose-5-phosphate isomerase A (231 aa).

Substrate is bound by residues 31–34 (SGST), 87–90 (DGAD), and 100–103 (KGGG). The active-site Proton acceptor is Glu109. Lys127 contacts substrate.

Belongs to the ribose 5-phosphate isomerase family. In terms of assembly, homodimer.

It carries out the reaction aldehydo-D-ribose 5-phosphate = D-ribulose 5-phosphate. It functions in the pathway carbohydrate degradation; pentose phosphate pathway; D-ribose 5-phosphate from D-ribulose 5-phosphate (non-oxidative stage): step 1/1. Functionally, catalyzes the reversible conversion of ribose-5-phosphate to ribulose 5-phosphate. This Chlamydia pneumoniae (Chlamydophila pneumoniae) protein is Ribose-5-phosphate isomerase A.